The following is a 132-amino-acid chain: Small ribosomal subunit protein uS8 (132 aa).

Belongs to the universal ribosomal protein uS8 family. In terms of assembly, part of the 30S ribosomal subunit. Contacts proteins S5 and S12.

Its function is as follows. One of the primary rRNA binding proteins, it binds directly to 16S rRNA central domain where it helps coordinate assembly of the platform of the 30S subunit. In Pseudarthrobacter chlorophenolicus (strain ATCC 700700 / DSM 12829 / CIP 107037 / JCM 12360 / KCTC 9906 / NCIMB 13794 / A6) (Arthrobacter chlorophenolicus), this protein is Small ribosomal subunit protein uS8.